The primary structure comprises 1400 residues: DNA-directed RNA polymerase subunit beta' (1400 aa).

4 residues coordinate Zn(2+): C70, C72, C85, and C88. Mg(2+) contacts are provided by D460, D462, and D464. Positions 814, 888, 895, and 898 each coordinate Zn(2+).

This sequence belongs to the RNA polymerase beta' chain family. In terms of assembly, the RNAP catalytic core consists of 2 alpha, 1 beta, 1 beta' and 1 omega subunit. When a sigma factor is associated with the core the holoenzyme is formed, which can initiate transcription. The cofactor is Mg(2+). It depends on Zn(2+) as a cofactor.

The enzyme catalyses RNA(n) + a ribonucleoside 5'-triphosphate = RNA(n+1) + diphosphate. Functionally, DNA-dependent RNA polymerase catalyzes the transcription of DNA into RNA using the four ribonucleoside triphosphates as substrates. The sequence is that of DNA-directed RNA polymerase subunit beta' from Vibrio vulnificus (strain CMCP6).